The primary structure comprises 1208 residues: Putative protease AXL1 (1208 aa).

His68 contacts Zn(2+). Glu71 acts as the Proton acceptor in catalysis. 2 residues coordinate Zn(2+): His72 and Glu156. At Ser262 the chain carries Phosphoserine.

The protein belongs to the peptidase M16 family. As to quaternary structure, interacts with BUD5. Requires Zn(2+) as cofactor.

The protein resides in the bud neck. Its function is as follows. Probable protease. Involved in axial budding. This Saccharomyces cerevisiae (strain ATCC 204508 / S288c) (Baker's yeast) protein is Putative protease AXL1 (AXL1).